The primary structure comprises 652 residues: Gametogenetin (652 aa).

Disordered stretches follow at residues Met1 to Gln39, Pro52 to Ser237, Pro251 to Gly273, Gln291 to Glu473, and Leu488 to Asn576. Basic and acidic residues-rich tracts occupy residues Gln18–Ser30 and Arg124–Gln133. Residues Arg123 to Pro486 are interaction with GGNBP1. 2 stretches are compositionally biased toward pro residues: residues Ser138–Arg149 and Gln163–Pro178. A compositionally biased stretch (polar residues) spans Glu201–Thr212. Low complexity-rich tracts occupy residues Ala213–Ala230, Pro251–Ser267, and Ala299–Ala312. Residue Ser389 is modified to Phosphoserine. Residues Ala407–Thr422 show a composition bias toward low complexity. Pro residues-rich tracts occupy residues Arg428–Thr466 and Ala495–Ala513. The segment at Asp491 to Asn652 is interactions with ZNF403/GGNBP2 and OAZ3. Over residues Thr523–Arg532 the composition is skewed to basic residues. The segment covering Thr538–Ala552 has biased composition (basic and acidic residues).

In terms of assembly, interacts with FANCL, GGNBP1 and ZNF403/GGNBP2.

In terms of biological role, may be involved in spermatogenesis. The sequence is that of Gametogenetin (GGN) from Homo sapiens (Human).